The sequence spans 175 residues: Disulfide bond formation protein B (175 aa).

The Cytoplasmic portion of the chain corresponds to 1-13; that stretch reads MTAFTRFAHSRAS. A helical transmembrane segment spans residues 14-30; that stretch reads WLILTGSAIALEAAALY. At 31 to 48 the chain is on the periplasmic side; it reads FQYVMKLDPCVMCIYQRL. Residues cysteine 40 and cysteine 43 are joined by a disulfide bond. The chain crosses the membrane as a helical span at residues 49-64; sequence AVFGILAAGLIGMTAP. Residues 65–71 lie on the Cytoplasmic side of the membrane; sequence KYRIVRI. The chain crosses the membrane as a helical span at residues 72–89; that stretch reads LGALGWAVSATWGLKLAL. Residues 90-144 lie on the Periplasmic side of the membrane; it reads ALVDMQNNPSPFSTCSFLPEFPAWMPLHEWFPSVMLPTGMCTDVPWQFMGVTMAE. A disulfide bond links cysteine 104 and cysteine 130. A helical transmembrane segment spans residues 145-163; the sequence is WMVVAFSGYLVALLLFIVP. The Cytoplasmic portion of the chain corresponds to 164–175; the sequence is ILSGSNKPSLYK.

The protein belongs to the DsbB family.

The protein localises to the cell inner membrane. Functionally, required for disulfide bond formation in some periplasmic proteins. Acts by oxidizing the DsbA protein. This Shewanella sp. (strain MR-4) protein is Disulfide bond formation protein B.